A 752-amino-acid polypeptide reads, in one-letter code: Catalase-peroxidase (752 aa).

Residues 1-20 (MENELVSKVKAPVPGNQTNT) are disordered. The segment at residues 111 to 234 (WHSAGTYRIG…LGAVQMGLIY (124 aa)) is a cross-link (tryptophyl-tyrosyl-methioninium (Trp-Tyr) (with M-260)). The active-site Proton acceptor is His112. Residues 234–260 (YVNPEGPNGKPDPAAAAVDIRETFARM) constitute a cross-link (tryptophyl-tyrosyl-methioninium (Tyr-Met) (with W-111)). Heme b is bound at residue His275.

Belongs to the peroxidase family. Peroxidase/catalase subfamily. As to quaternary structure, homodimer or homotetramer. Heme b serves as cofactor. Formation of the three residue Trp-Tyr-Met cross-link is important for the catalase, but not the peroxidase activity of the enzyme.

The enzyme catalyses H2O2 + AH2 = A + 2 H2O. The catalysed reaction is 2 H2O2 = O2 + 2 H2O. In terms of biological role, bifunctional enzyme with both catalase and broad-spectrum peroxidase activity. The polypeptide is Catalase-peroxidase (Koribacter versatilis (strain Ellin345)).